Reading from the N-terminus, the 158-residue chain is Ribosome-binding factor A (158 aa).

The segment at 130–158 (TAQYAGDADPYKHDDEAEAEGDEFESDEE) is disordered. Residues 145–158 (EAEAEGDEFESDEE) show a composition bias toward acidic residues.

It belongs to the RbfA family. In terms of assembly, monomer. Binds 30S ribosomal subunits, but not 50S ribosomal subunits or 70S ribosomes.

Its subcellular location is the cytoplasm. One of several proteins that assist in the late maturation steps of the functional core of the 30S ribosomal subunit. Associates with free 30S ribosomal subunits (but not with 30S subunits that are part of 70S ribosomes or polysomes). Required for efficient processing of 16S rRNA. May interact with the 5'-terminal helix region of 16S rRNA. The polypeptide is Ribosome-binding factor A (Bifidobacterium longum subsp. infantis (strain ATCC 15697 / DSM 20088 / JCM 1222 / NCTC 11817 / S12)).